We begin with the raw amino-acid sequence, 892 residues long: Alanine--tRNA ligase (892 aa).

Zn(2+) is bound by residues H574, H578, C676, and H680.

This sequence belongs to the class-II aminoacyl-tRNA synthetase family. Requires Zn(2+) as cofactor.

The protein resides in the cytoplasm. It catalyses the reaction tRNA(Ala) + L-alanine + ATP = L-alanyl-tRNA(Ala) + AMP + diphosphate. Its function is as follows. Catalyzes the attachment of alanine to tRNA(Ala) in a two-step reaction: alanine is first activated by ATP to form Ala-AMP and then transferred to the acceptor end of tRNA(Ala). Also edits incorrectly charged Ser-tRNA(Ala) and Gly-tRNA(Ala) via its editing domain. The protein is Alanine--tRNA ligase of Prochlorococcus marinus (strain MIT 9313).